We begin with the raw amino-acid sequence, 353 residues long: Serine proteinase inhibitor 1 (353 aa).

This sequence belongs to the serpin family. Poxviruses subfamily.

Its subcellular location is the host cytoplasm. Plays a role in mediating viral host range. May act to inhibit a caspase independent form of apoptosis to allow efficient virus replication in infected cells. The sequence is that of Serine proteinase inhibitor 1 (OPG208) from Vaccinia virus (strain Western Reserve) (VACV).